A 408-amino-acid polypeptide reads, in one-letter code: Na(+)-translocating NADH-quinone reductase subunit F (408 aa).

A helical transmembrane segment spans residues 6–26 (IILGVVMFTAIVLALVAIILA). A 2Fe-2S ferredoxin-type domain is found at 35-127 (GDVTIRINGE…DMDVEVPEEV (93 aa)). 4 residues coordinate [2Fe-2S] cluster: C70, C76, C79, and C111. An FAD-binding FR-type domain is found at 130–270 (VKAWECTVES…YGPFGEFFAK (141 aa)).

The protein belongs to the NqrF family. As to quaternary structure, composed of six subunits; NqrA, NqrB, NqrC, NqrD, NqrE and NqrF. The cofactor is [2Fe-2S] cluster. FAD serves as cofactor.

The protein localises to the cell inner membrane. It catalyses the reaction a ubiquinone + n Na(+)(in) + NADH + H(+) = a ubiquinol + n Na(+)(out) + NAD(+). Its function is as follows. NQR complex catalyzes the reduction of ubiquinone-1 to ubiquinol by two successive reactions, coupled with the transport of Na(+) ions from the cytoplasm to the periplasm. The first step is catalyzed by NqrF, which accepts electrons from NADH and reduces ubiquinone-1 to ubisemiquinone by a one-electron transfer pathway. This Marinomonas sp. (strain MWYL1) protein is Na(+)-translocating NADH-quinone reductase subunit F.